A 309-amino-acid chain; its full sequence is Protein FdhE homolog (309 aa).

It belongs to the FdhE family.

Its subcellular location is the cytoplasm. In terms of biological role, necessary for formate dehydrogenase activity. This Serratia proteamaculans (strain 568) protein is Protein FdhE homolog.